The sequence spans 295 residues: tRNA-cytidine(32) 2-sulfurtransferase (295 aa).

The PP-loop motif signature appears at 63-68; that stretch reads SGGKDS. 3 residues coordinate [4Fe-4S] cluster: Cys138, Cys141, and Cys229.

Belongs to the TtcA family. In terms of assembly, homodimer. It depends on Mg(2+) as a cofactor. [4Fe-4S] cluster serves as cofactor.

The protein localises to the cytoplasm. It catalyses the reaction cytidine(32) in tRNA + S-sulfanyl-L-cysteinyl-[cysteine desulfurase] + AH2 + ATP = 2-thiocytidine(32) in tRNA + L-cysteinyl-[cysteine desulfurase] + A + AMP + diphosphate + H(+). The protein operates within tRNA modification. In terms of biological role, catalyzes the ATP-dependent 2-thiolation of cytidine in position 32 of tRNA, to form 2-thiocytidine (s(2)C32). The sulfur atoms are provided by the cysteine/cysteine desulfurase (IscS) system. The polypeptide is tRNA-cytidine(32) 2-sulfurtransferase (Mesorhizobium japonicum (strain LMG 29417 / CECT 9101 / MAFF 303099) (Mesorhizobium loti (strain MAFF 303099))).